The sequence spans 138 residues: Acidic phospholipase A2 homolog sistruxin A (138 aa).

The signal sequence occupies residues 1 to 37 (MRALWIVAVLLLGVEGSLVEFETLIMKIAGRSGVWYY). Disulfide bonds link Cys-42–Cys-131, Cys-44–Cys-60, Cys-59–Cys-111, Cys-65–Cys-138, Cys-66–Cys-104, Cys-73–Cys-97, and Cys-91–Cys-102. A propeptide spanning residues 78–83 (DVYTYR) is cleaved from the precursor. Gln-84 carries the post-translational modification Pyrrolidone carboxylic acid. The propeptide occupies 119-124 (YNHKYW).

The protein belongs to the phospholipase A2 family. Group II subfamily. D49 sub-subfamily. As to quaternary structure, heterodimer of an acidic subunit and a basic chain. The acidic subunit is non-toxic, without enzymatic activity and comprises 3 peptides that are cross-linked by 7 disulfide bridges. The basic subunit is toxic, has phospholipase A2 activity and is composed of a single chain. As to expression, expressed by the venom gland.

The protein localises to the secreted. Snake venom phospholipase A2 (PLA2) that inhibits neuromuscular transmission by blocking acetylcholine release from the nerve termini. This is Acidic phospholipase A2 homolog sistruxin A from Sistrurus tergeminus (Western massasauga).